The primary structure comprises 415 residues: Runt-related transcription factor 3 (415 aa).

Disordered regions lie at residues 1 to 48, 176 to 266, and 375 to 415; these read MRIP…GGRA, GPRE…FPDP, and NLMN…WRPY. One can recognise a Runt domain in the interval 54-182; it reads SMVDVLADHA…TVDGPREPRR (129 aa). Residues 186–205 show a composition bias toward basic and acidic residues; it reads KLEDQTKPFPDRFGDLERLR. Lys-192 participates in a covalent cross-link: Glycyl lysine isopeptide (Lys-Gly) (interchain with G-Cter in SUMO2). Residues 209–240 show a composition bias toward polar residues; the sequence is TPSTPSPRGSLSTTSHFSSQPQTPIQGTSELN. Residue Ser-243 is modified to Phosphoserine. A compositionally biased stretch (polar residues) spans 393–402; it reads SHSNSPTALS. Residues 406–415 show a composition bias toward basic and acidic residues; sequence RMDEAVWRPY.

Heterodimer with CBFB. RUNX3 binds DNA as a monomer and through the Runt domain. DNA-binding is increased by heterodimerization. Interacts with TLE1 and SUV39H1. The tyrosine phosphorylated form (via runt domain) interacts with SRC (via protein kinase domain). Interacts with FYN and LCK. Interacts with FOXP3. Interacts with ZFHX3. Interacts with TBX21. Phosphorylated on tyrosine residues by SRC. Phosphorylated by LCK and FYN. In terms of tissue distribution, expressed in gastric cancer tissues (at protein level).

It localises to the nucleus. Its subcellular location is the cytoplasm. Forms the heterodimeric complex core-binding factor (CBF) with CBFB. RUNX members modulate the transcription of their target genes through recognizing the core consensus binding sequence 5'-TGTGGT-3', or very rarely, 5'-TGCGGT-3', within their regulatory regions via their runt domain, while CBFB is a non-DNA-binding regulatory subunit that allosterically enhances the sequence-specific DNA-binding capacity of RUNX. The heterodimers bind to the core site of a number of enhancers and promoters, including murine leukemia virus, polyomavirus enhancer, T-cell receptor enhancers, LCK, IL3 and GM-CSF promoters. May be involved in the control of cellular proliferation and/or differentiation. In association with ZFHX3, up-regulates CDKN1A promoter activity following TGF-beta stimulation. CBF complexes repress ZBTB7B transcription factor during cytotoxic (CD8+) T cell development. They bind to RUNX-binding sequence within the ZBTB7B locus acting as transcriptional silencer and allowing for cytotoxic T cell differentiation. CBF complexes binding to the transcriptional silencer is essential for recruitment of nuclear protein complexes that catalyze epigenetic modifications to establish epigenetic ZBTB7B silencing. Necessary for the development and survival of sensory neurons expressing parvalbumin. This chain is Runt-related transcription factor 3 (RUNX3), found in Homo sapiens (Human).